The primary structure comprises 573 residues: Sulfite reductase [NADPH] hemoprotein beta-component (573 aa).

Positions 436, 442, 481, and 485 each coordinate [4Fe-4S] cluster. Cys485 provides a ligand contact to siroheme.

It belongs to the nitrite and sulfite reductase 4Fe-4S domain family. As to quaternary structure, alpha(8)-beta(8). The alpha component is a flavoprotein, the beta component is a hemoprotein. Siroheme is required as a cofactor. Requires [4Fe-4S] cluster as cofactor.

The catalysed reaction is hydrogen sulfide + 3 NADP(+) + 3 H2O = sulfite + 3 NADPH + 4 H(+). Its pathway is sulfur metabolism; hydrogen sulfide biosynthesis; hydrogen sulfide from sulfite (NADPH route): step 1/1. Its function is as follows. Component of the sulfite reductase complex that catalyzes the 6-electron reduction of sulfite to sulfide. This is one of several activities required for the biosynthesis of L-cysteine from sulfate. In Alteromonas mediterranea (strain DSM 17117 / CIP 110805 / LMG 28347 / Deep ecotype), this protein is Sulfite reductase [NADPH] hemoprotein beta-component.